The following is a 334-amino-acid chain: B3 domain-containing protein LOC_Os12g40090 (334 aa).

A DNA-binding region (TF-B3 1) is located at residues 5 to 102 (RIRFFRLMTG…SFDVLIFDAS (98 aa)). The segment at 142 to 178 (TSTPSVLIGSPHKASTSKKLSGKTKTNPRKEPEDPNC) is disordered. Positions 154-166 (KASTSKKLSGKTK) are enriched in low complexity. The segment at residues 227–326 (FVVVLQTAHV…TMTVHVIGKA (100 aa)) is a DNA-binding region (TF-B3 2).

It localises to the nucleus. This is B3 domain-containing protein LOC_Os12g40090 from Oryza sativa subsp. japonica (Rice).